A 1132-amino-acid chain; its full sequence is Mediator of RNA polymerase II transcription subunit 5 (1132 aa).

The span at 998–1023 (KGDVDIKGEDLHEKNDSAEVRQETQP) shows a compositional bias: basic and acidic residues. The tract at residues 998-1070 (KGDVDIKGED…RTNNVPMIKA (73 aa)) is disordered. Acidic residues predominate over residues 1047–1057 (YEEEEENEDND).

It belongs to the Mediator complex subunit 5 family. As to quaternary structure, component of the Mediator complex, which is composed of at least 21 subunits that form three structurally distinct submodules. The Mediator head module contains MED6, MED8, MED11, SRB4/MED17, SRB5/MED18, ROX3/MED19, SRB2/MED20 and SRB6/MED22, the middle module contains MED1, MED4, NUT1/MED5, MED7, CSE2/MED9, NUT2/MED10, SRB7/MED21 and SOH1/MED31, and the tail module contains MED2, PGD1/MED3, RGR1/MED14, GAL11/MED15 and SIN4/MED16. The head and the middle modules interact directly with RNA polymerase II, whereas the elongated tail module interacts with gene-specific regulatory proteins.

It localises to the nucleus. Functionally, component of the Mediator complex, a coactivator involved in the regulated transcription of nearly all RNA polymerase II-dependent genes. Mediator functions as a bridge to convey information from gene-specific regulatory proteins to the basal RNA polymerase II transcription machinery. The Mediator complex, having a compact conformation in its free form, is recruited to promoters by direct interactions with regulatory proteins and serves for the assembly of a functional preinitiation complex with RNA polymerase II and the general transcription factors. The Mediator complex unfolds to an extended conformation and partially surrounds RNA polymerase II, specifically interacting with the unphosphorylated form of the C-terminal domain (CTD) of RNA polymerase II. The Mediator complex dissociates from the RNA polymerase II holoenzyme and stays at the promoter when transcriptional elongation begins. The chain is Mediator of RNA polymerase II transcription subunit 5 (NUT1) from Saccharomyces cerevisiae (strain ATCC 204508 / S288c) (Baker's yeast).